The primary structure comprises 32 residues: Potassium channel toxin alpha-KTx 10.2 (32 aa).

Disulfide bonds link C3-C22, C8-C12, and C27-C29. Position 32 is a tyrosine amide (Y32).

It belongs to the short scorpion toxin superfamily. Potassium channel inhibitor family. Alpha-KTx 10 subfamily. In terms of tissue distribution, expressed by the venom gland.

The protein localises to the secreted. Its function is as follows. Blocks Shaker B potassium-channels (Kv1.1/KCNA1 sub-family). The protein is Potassium channel toxin alpha-KTx 10.2 of Centruroides noxius (Mexican scorpion).